Reading from the N-terminus, the 85-residue chain is MSERGNRKTQVGVVVSDKMDKTAVVKVDRLVKHPVYNKYIKRSAKYKAHDMDNAAKIGDRVIIVETRPLSKDKRWKIRQIIESKA.

This sequence belongs to the universal ribosomal protein uS17 family. Part of the 30S ribosomal subunit.

Its function is as follows. One of the primary rRNA binding proteins, it binds specifically to the 5'-end of 16S ribosomal RNA. The protein is Small ribosomal subunit protein uS17 of Geobacter sp. (strain M21).